A 449-amino-acid polypeptide reads, in one-letter code: MAASPLVRFAPSPTGFLHIGNARPALLNALFARRAGGRFLLRLDDTDRERSTEEFASAVAEDLGWLGITPDLFFRQSERTALYDTAAERLKAAGRLYPCYETPEELDRRRKRQLGRGLPPIYDRAALALSEADRAALEAEGRRPHWRFKLDHRVVAWNDLVRGESHVDCASLSDPVLVRADGSYLYTLPSVVDDAEVGVTDVIRGEDHVTNTGVQVQLFEALGAAIPAFGHHNLLTTADGEGLSKRLGHLSLRSLREAGYEPAAVRSLAVLTGSAEAVRPVASLDELASLVDLAHLSRAPARFDPAELDGMNARLVHEMPLDAVRERLAALGVPAEAADAFWAAVRANLGRVAEAADWWRVVAGPVTPVVSEPDFIARAARLLPEAPFDAGTWKAWTDAVKAETGAKGRALFMPLRLALTGLDHGPDLSALLPLIGRERAARRLAGETA.

The 'HIGH' region motif lies at 11–21 (PSPTGFLHIGN). The 'KMSKS' region signature appears at 242–246 (GLSKR). ATP is bound at residue Lys245.

This sequence belongs to the class-I aminoacyl-tRNA synthetase family. Glutamate--tRNA ligase type 1 subfamily. Monomer.

It localises to the cytoplasm. The catalysed reaction is tRNA(Glu) + L-glutamate + ATP = L-glutamyl-tRNA(Glu) + AMP + diphosphate. In terms of biological role, catalyzes the attachment of glutamate to tRNA(Glu) in a two-step reaction: glutamate is first activated by ATP to form Glu-AMP and then transferred to the acceptor end of tRNA(Glu). This Methylorubrum populi (strain ATCC BAA-705 / NCIMB 13946 / BJ001) (Methylobacterium populi) protein is Glutamate--tRNA ligase 2.